Consider the following 432-residue polypeptide: Tol-Pal system protein TolB (432 aa).

Residues 1 to 21 form the signal peptide; sequence MKKVIYTIVGFVFMWSTSVYA.

It belongs to the TolB family. The Tol-Pal system is composed of five core proteins: the inner membrane proteins TolA, TolQ and TolR, the periplasmic protein TolB and the outer membrane protein Pal. They form a network linking the inner and outer membranes and the peptidoglycan layer.

Its subcellular location is the periplasm. In terms of biological role, part of the Tol-Pal system, which plays a role in outer membrane invagination during cell division and is important for maintaining outer membrane integrity. The protein is Tol-Pal system protein TolB of Hydrogenovibrio crunogenus (strain DSM 25203 / XCL-2) (Thiomicrospira crunogena).